A 251-amino-acid polypeptide reads, in one-letter code: MADPVLQSPKNSHFFQPLLPGFDSYLNIPVKFFSKRIQGRNEGRTVELRTDASEKTWQVKIQGRRLTVGWKEFASAHDFRVGDIIVFRHEGSLVFHVTALGPSCCEIQYVPSCNNQENISNLSMKQSIKTELESSLDEDKVNMGKFPRKKHVKKRIPEAEAKSFSSDKSCFVAHVTDSNLREDTLFLPRKFDRSDGLIKGSNKIVLMNEEARTWTLILKFRNSSRTFYMRGGWTSFSMSMGLNLEIPSRLN.

2 consecutive DNA-binding regions (TF-B3) follow at residues asparagine 11–serine 103 and cysteine 170–asparagine 251.

It localises to the nucleus. In Arabidopsis thaliana (Mouse-ear cress), this protein is B3 domain-containing protein REM7 (REM7).